The following is a 324-amino-acid chain: Malate dehydrogenase (324 aa).

NAD(+) contacts are provided by residues 21-26 and aspartate 45; that span reads GAGRVG. Residues arginine 94 and arginine 100 each coordinate substrate. NAD(+) is bound by residues asparagine 107 and 130-132; that span reads VTN. Residues asparagine 132 and arginine 163 each contribute to the substrate site. Histidine 187 serves as the catalytic Proton acceptor.

Belongs to the LDH/MDH superfamily. MDH type 3 family.

It catalyses the reaction (S)-malate + NAD(+) = oxaloacetate + NADH + H(+). Functionally, catalyzes the reversible oxidation of malate to oxaloacetate. This chain is Malate dehydrogenase, found in Trichormus variabilis (strain ATCC 29413 / PCC 7937) (Anabaena variabilis).